The sequence spans 290 residues: Porphobilinogen deaminase (290 aa).

Cys238 is subject to S-(dipyrrolylmethanemethyl)cysteine.

It belongs to the HMBS family. Monomer. The cofactor is dipyrromethane.

It catalyses the reaction 4 porphobilinogen + H2O = hydroxymethylbilane + 4 NH4(+). It functions in the pathway porphyrin-containing compound metabolism; protoporphyrin-IX biosynthesis; coproporphyrinogen-III from 5-aminolevulinate: step 2/4. In terms of biological role, tetrapolymerization of the monopyrrole PBG into the hydroxymethylbilane pre-uroporphyrinogen in several discrete steps. The sequence is that of Porphobilinogen deaminase from Caldicellulosiruptor saccharolyticus (strain ATCC 43494 / DSM 8903 / Tp8T 6331).